Consider the following 147-residue polypeptide: UPF0178 protein Nther_1836 (147 aa).

Belongs to the UPF0178 family.

This is UPF0178 protein Nther_1836 from Natranaerobius thermophilus (strain ATCC BAA-1301 / DSM 18059 / JW/NM-WN-LF).